A 131-amino-acid chain; its full sequence is Ribosome-binding factor A (131 aa).

Belongs to the RbfA family. Monomer. Binds 30S ribosomal subunits, but not 50S ribosomal subunits or 70S ribosomes.

It localises to the cytoplasm. Functionally, one of several proteins that assist in the late maturation steps of the functional core of the 30S ribosomal subunit. Associates with free 30S ribosomal subunits (but not with 30S subunits that are part of 70S ribosomes or polysomes). Required for efficient processing of 16S rRNA. May interact with the 5'-terminal helix region of 16S rRNA. The sequence is that of Ribosome-binding factor A from Vibrio vulnificus (strain CMCP6).